Consider the following 328-residue polypeptide: D-cysteine desulfhydrase (328 aa).

Lys51 carries the N6-(pyridoxal phosphate)lysine modification.

This sequence belongs to the ACC deaminase/D-cysteine desulfhydrase family. In terms of assembly, homodimer. It depends on pyridoxal 5'-phosphate as a cofactor.

The enzyme catalyses D-cysteine + H2O = hydrogen sulfide + pyruvate + NH4(+) + H(+). Catalyzes the alpha,beta-elimination reaction of D-cysteine and of several D-cysteine derivatives. It could be a defense mechanism against D-cysteine. The sequence is that of D-cysteine desulfhydrase from Escherichia fergusonii (strain ATCC 35469 / DSM 13698 / CCUG 18766 / IAM 14443 / JCM 21226 / LMG 7866 / NBRC 102419 / NCTC 12128 / CDC 0568-73).